A 78-amino-acid polypeptide reads, in one-letter code: U7-lycotoxin-Ls1h (78 aa).

Positions 1-22 (MKLIIFTGLTLLLIVSLIDVEA) are cleaved as a signal peptide. Residues 23–26 (QNEG) constitute a propeptide that is removed on maturation.

This sequence belongs to the neurotoxin 19 (CSTX) family. 07 (U7-Lctx) subfamily. In terms of processing, contains 4 disulfide bonds. Expressed by the venom gland.

It is found in the secreted. The polypeptide is U7-lycotoxin-Ls1h (Lycosa singoriensis (Wolf spider)).